The sequence spans 428 residues: Enolase (428 aa).

Gln163 is a (2R)-2-phosphoglycerate binding site. The active-site Proton donor is Glu205. Mg(2+) contacts are provided by Asp242, Glu283, and Asp310. Positions 335, 364, 365, and 386 each coordinate (2R)-2-phosphoglycerate. Lys335 serves as the catalytic Proton acceptor.

This sequence belongs to the enolase family. Mg(2+) is required as a cofactor.

It localises to the cytoplasm. The protein localises to the secreted. It is found in the cell surface. The enzyme catalyses (2R)-2-phosphoglycerate = phosphoenolpyruvate + H2O. It functions in the pathway carbohydrate degradation; glycolysis; pyruvate from D-glyceraldehyde 3-phosphate: step 4/5. Functionally, catalyzes the reversible conversion of 2-phosphoglycerate (2-PG) into phosphoenolpyruvate (PEP). It is essential for the degradation of carbohydrates via glycolysis. The protein is Enolase of Sulfurihydrogenibium sp. (strain YO3AOP1).